A 318-amino-acid chain; its full sequence is 1-aminocyclopropane-1-carboxylate oxidase (318 aa).

The region spanning 153-253 is the Fe2OG dioxygenase domain; it reads PNFGTKVANY…RMSIASFYNP (101 aa). Histidine 177, aspartate 179, and histidine 234 together coordinate Fe cation.

Belongs to the iron/ascorbate-dependent oxidoreductase family. Fe cation serves as cofactor.

It catalyses the reaction 1-aminocyclopropane-1-carboxylate + L-ascorbate + O2 = ethene + L-dehydroascorbate + hydrogen cyanide + CO2 + 2 H2O. It participates in alkene biosynthesis; ethylene biosynthesis via S-adenosyl-L-methionine; ethylene from S-adenosyl-L-methionine: step 2/2. This chain is 1-aminocyclopropane-1-carboxylate oxidase (DK-ACO1), found in Diospyros kaki (Kaki persimmon).